The primary structure comprises 94 residues: Large ribosomal subunit protein bL27 (94 aa).

The propeptide occupies 1 to 9; sequence MLRLDLQFF.

Belongs to the bacterial ribosomal protein bL27 family. In terms of processing, the N-terminus is cleaved by ribosomal processing cysteine protease Prp.

This Bacillus pumilus (strain SAFR-032) protein is Large ribosomal subunit protein bL27.